A 389-amino-acid polypeptide reads, in one-letter code: Chalcone synthase 9 (389 aa).

The active site involves C164.

Belongs to the thiolase-like superfamily. Chalcone/stilbene synthases family.

The enzyme catalyses (E)-4-coumaroyl-CoA + 3 malonyl-CoA + 3 H(+) = 2',4,4',6'-tetrahydroxychalcone + 3 CO2 + 4 CoA. The protein operates within secondary metabolite biosynthesis; flavonoid biosynthesis. Its function is as follows. The primary product of this enzyme is 4,2',4',6'-tetrahydroxychalcone (also termed naringenin-chalcone or chalcone) which can under specific conditions spontaneously isomerize into naringenin. In Medicago sativa (Alfalfa), this protein is Chalcone synthase 9 (CHS9).